Reading from the N-terminus, the 54-residue chain is Photosystem II reaction center protein K (54 aa).

A propeptide spanning residues 1–17 (MFQISLDMISNKINLLG) is cleaved from the precursor. Residues 29-49 (IVDVLPIIPILFFLLAFVWQA) traverse the membrane as a helical segment.

It belongs to the PsbK family. In terms of assembly, PSII is composed of 1 copy each of membrane proteins PsbA, PsbB, PsbC, PsbD, PsbE, PsbF, PsbH, PsbI, PsbJ, PsbK, PsbL, PsbM, PsbT, PsbY, PsbZ, Psb30/Ycf12, at least 3 peripheral proteins of the oxygen-evolving complex and a large number of cofactors. It forms dimeric complexes.

Its subcellular location is the plastid. The protein localises to the chloroplast thylakoid membrane. In terms of biological role, one of the components of the core complex of photosystem II (PSII). PSII is a light-driven water:plastoquinone oxidoreductase that uses light energy to abstract electrons from H(2)O, generating O(2) and a proton gradient subsequently used for ATP formation. It consists of a core antenna complex that captures photons, and an electron transfer chain that converts photonic excitation into a charge separation. The polypeptide is Photosystem II reaction center protein K (Euglena stellata).